Reading from the N-terminus, the 179-residue chain is Adenine phosphoribosyltransferase (179 aa).

This sequence belongs to the purine/pyrimidine phosphoribosyltransferase family. In terms of assembly, homodimer.

Its subcellular location is the cytoplasm. The enzyme catalyses AMP + diphosphate = 5-phospho-alpha-D-ribose 1-diphosphate + adenine. It functions in the pathway purine metabolism; AMP biosynthesis via salvage pathway; AMP from adenine: step 1/1. Catalyzes a salvage reaction resulting in the formation of AMP, that is energically less costly than de novo synthesis. This is Adenine phosphoribosyltransferase from Dinoroseobacter shibae (strain DSM 16493 / NCIMB 14021 / DFL 12).